The following is a 144-amino-acid chain: Galectin b (144 aa).

Residues D1–V138 form the Galectin domain.

Its function is as follows. Lectin that binds beta-galactoside and a wide array of complex carbohydrates. This chain is Galectin b, found in Aplysina lactuca (Marine sponge).